We begin with the raw amino-acid sequence, 974 residues long: Translation initiation factor IF-2 (974 aa).

The interval 31–376 (FVKSASSTVE…APAVGGVRLP (346 aa)) is disordered. A compositionally biased stretch (low complexity) spans 52-68 (PSAKSADSAARPAAKPG). Positions 83–96 (GPRPGPKPAAPAPA) are enriched in pro residues. Residues 97–133 (APAAAAPAATPAAQAPAPAAPAASTATPAAPASNAPK) show a composition bias toward low complexity. A compositionally biased stretch (pro residues) spans 134 to 147 (PGRPTPAAPAPAAP). Low complexity-rich tracts occupy residues 148 to 166 (AAPAAPAAASTPAAPSTGA) and 179 to 191 (RVGNNPYSSAPAE). Pro residues-rich tracts occupy residues 195-210 (PRPAPGAPRPGAPRPA) and 253-266 (RPSPGSMPPRPNPG). The segment covering 267-277 (AMPARSARPAP) has biased composition (low complexity). Positions 279–332 (GRPGRPGGAPGGRPGGGGGGYRGGGAPGAGAGAPGGGAPAGGFRGRPGGGGRPG) are enriched in gly residues. Over residues 349 to 358 (RRGRKSKRQK) the composition is skewed to basic residues. A tr-type G domain is found at 470–641 (SRPPVVTVMG…AVLLTADAAL (172 aa)). The tract at residues 479 to 486 (GHVDHGKT) is G1. A GTP-binding site is contributed by 479–486 (GHVDHGKT). Positions 504–508 (GITQH) are G2. The G3 stretch occupies residues 529–532 (DTPG). Residues 529–533 (DTPGH) and 583–586 (NKID) each bind GTP. Residues 583-586 (NKID) form a G4 region. The segment at 619–621 (SAK) is G5.

Belongs to the TRAFAC class translation factor GTPase superfamily. Classic translation factor GTPase family. IF-2 subfamily.

Its subcellular location is the cytoplasm. One of the essential components for the initiation of protein synthesis. Protects formylmethionyl-tRNA from spontaneous hydrolysis and promotes its binding to the 30S ribosomal subunits. Also involved in the hydrolysis of GTP during the formation of the 70S ribosomal complex. The sequence is that of Translation initiation factor IF-2 from Rhodococcus opacus (strain B4).